We begin with the raw amino-acid sequence, 669 residues long: Myb-like protein M (669 aa).

The interval 27–69 (DPSLMDDEFSDNEYDLSPKDDVPSPSKRGRGQIQNGIRRSPNK) is disordered. The span at 30–40 (LMDDEFSDNEY) shows a compositional bias: acidic residues. 2 HTH myb-type domains span residues 60-118 (QNGI…SPDI) and 119-170 (RKGP…SREV). 2 consecutive DNA-binding regions (H-T-H motif) follow at residues 90 to 114 (WKRI…KRVL) and 142 to 166 (WKKI…KSLQ). One can recognise a Myb-like domain in the interval 172–223 (WVPKEDEVLVKKVDEMGENLSWLEVSEYLAKLKHTNTLRTALECKTRYLQLT). Disordered regions lie at residues 226–530 (GGSI…EDNG) and 550–636 (IKNK…PHQS). Low complexity-rich tracts occupy residues 234-382 (NQSN…SSPS), 389-415 (NNNN…NSNN), and 450-464 (PTSL…SSPS). Residues 465–482 (CNNSIRQPSPSPSIKTFK) are compositionally biased toward polar residues. Low complexity-rich tracts occupy residues 483-521 (STIV…NNDN), 555-593 (NNNN…NSDN), and 611-636 (SNFK…PHQS).

The protein resides in the nucleus. The sequence is that of Myb-like protein M (mybM) from Dictyostelium discoideum (Social amoeba).